The chain runs to 616 residues: Polypeptide N-acetylgalactosaminyltransferase 3 (616 aa).

Residues 13–33 (FFHWKLWKFSIIVFVFLVFLF) traverse the membrane as a helical; Signal-anchor for type II membrane protein segment. The tract at residues 182 to 291 (LPTTSIIIVF…YGWLEPLLAR (110 aa)) is catalytic subdomain A. Asp-275, His-277, and His-413 together coordinate Mn(2+). The tract at residues 354 to 416 (PIRTPTFAGG…PCSVVGHVFR (63 aa)) is catalytic subdomain B. N-linked (GlcNAc...) asparagine glycosylation is present at Asn-482. A Ricin B-type lectin domain is found at 512–616 (NRMCLDVGEN…FQKWIFGQND (105 aa)). Cys-515 and Cys-533 are oxidised to a cystine. 4 residues coordinate UDP-N-acetyl-alpha-D-galactosamine: Asp-517, Glu-520, His-534, and Asn-539. Cys-588 and Cys-601 are joined by a disulfide.

This sequence belongs to the glycosyltransferase 2 family. GalNAc-T subfamily. Requires Mn(2+) as cofactor.

It is found in the golgi apparatus. Its subcellular location is the golgi stack membrane. It carries out the reaction L-seryl-[protein] + UDP-N-acetyl-alpha-D-galactosamine = a 3-O-[N-acetyl-alpha-D-galactosaminyl]-L-seryl-[protein] + UDP + H(+). The catalysed reaction is L-threonyl-[protein] + UDP-N-acetyl-alpha-D-galactosamine = a 3-O-[N-acetyl-alpha-D-galactosaminyl]-L-threonyl-[protein] + UDP + H(+). The protein operates within protein modification; protein glycosylation. In terms of biological role, catalyzes the initial reaction in O-linked oligosaccharide biosynthesis, the transfer of an N-acetyl-D-galactosamine residue to a serine or threonine residue on the protein receptor. Glycosylates FGF23. The sequence is that of Polypeptide N-acetylgalactosaminyltransferase 3 (GALNT3) from Taeniopygia guttata (Zebra finch).